Reading from the N-terminus, the 292-residue chain is 33 kDa chaperonin (292 aa).

2 disulfide bridges follow: C230–C232 and C263–C266.

It belongs to the HSP33 family. In terms of processing, under oxidizing conditions two disulfide bonds are formed involving the reactive cysteines. Under reducing conditions zinc is bound to the reactive cysteines and the protein is inactive.

It is found in the cytoplasm. Functionally, redox regulated molecular chaperone. Protects both thermally unfolding and oxidatively damaged proteins from irreversible aggregation. Plays an important role in the bacterial defense system toward oxidative stress. This Shigella boydii serotype 4 (strain Sb227) protein is 33 kDa chaperonin.